Consider the following 152-residue polypeptide: Ribosome maturation factor RimP (152 aa).

It belongs to the RimP family.

It is found in the cytoplasm. In terms of biological role, required for maturation of 30S ribosomal subunits. The sequence is that of Ribosome maturation factor RimP from Aeromonas salmonicida (strain A449).